The sequence spans 71 residues: MVESALEPNITTKSVGQAIRAHLRVLKLTKKPSREEFLTIAKVAGAGILAVGAVGFIIYVLLTMLPQWVAK.

The helical transmembrane segment at 43–63 threads the bilayer; it reads VAGAGILAVGAVGFIIYVLLT.

This sequence belongs to the SecE/SEC61-gamma family. As to quaternary structure, component of the Sec protein translocase complex. Heterotrimer consisting of SecY (alpha), SecG (beta) and SecE (gamma) subunits. The heterotrimers can form oligomers, although 1 heterotrimer is thought to be able to translocate proteins. Interacts with the ribosome. May interact with SecDF, and other proteins may be involved.

The protein localises to the cell membrane. Essential subunit of the Sec protein translocation channel SecYEG. Clamps together the 2 halves of SecY. May contact the channel plug during translocation. The chain is Protein translocase subunit SecE from Methanosarcina mazei (strain ATCC BAA-159 / DSM 3647 / Goe1 / Go1 / JCM 11833 / OCM 88) (Methanosarcina frisia).